The chain runs to 221 residues: MITLSAEQCRIIGVMLEKETTTPEQYPLSLNGITTGCNQKSNRDPVMSLSESDVQNLVDELVQMNQLMVDQKASTRVNKYFHRFCDTEFGNLKFTPQQRAVICVLFLRGPQTPGELRTRTNRLADFADVSEVDNTLTQLQDLNGLTLVRKLEREPGKRESRYVHLLSDVDESSFTQAVTTQTEVVLSEEQTSLTQRVTELEQQVASLTEQINCITELLNDD.

Belongs to the UPF0502 family.

This Colwellia psychrerythraea (strain 34H / ATCC BAA-681) (Vibrio psychroerythus) protein is UPF0502 protein CPS_0106.